A 328-amino-acid polypeptide reads, in one-letter code: Malate dehydrogenase 1 (328 aa).

Residue 12 to 18 participates in NAD(+) binding; sequence GAAGQIA. Residues arginine 93 and arginine 99 each coordinate substrate. NAD(+) is bound by residues asparagine 106, glutamine 113, and 130–132; that span reads VGN. The substrate site is built by asparagine 132 and arginine 163. Histidine 188 serves as the catalytic Proton acceptor.

Belongs to the LDH/MDH superfamily. MDH type 2 family.

The enzyme catalyses (S)-malate + NAD(+) = oxaloacetate + NADH + H(+). Functionally, catalyzes the reversible oxidation of malate to oxaloacetate. This Burkholderia vietnamiensis (strain G4 / LMG 22486) (Burkholderia cepacia (strain R1808)) protein is Malate dehydrogenase 1.